Reading from the N-terminus, the 222-residue chain is Phosphoribosylformylglycinamidine synthase subunit PurQ (222 aa).

The region spanning 3–222 (AAVVVFPGSN…RALSGLLTDA (220 aa)) is the Glutamine amidotransferase type-1 domain. Cys86 serves as the catalytic Nucleophile. Active-site residues include His194 and Glu196.

As to quaternary structure, part of the FGAM synthase complex composed of 1 PurL, 1 PurQ and 2 PurS subunits.

It is found in the cytoplasm. The catalysed reaction is N(2)-formyl-N(1)-(5-phospho-beta-D-ribosyl)glycinamide + L-glutamine + ATP + H2O = 2-formamido-N(1)-(5-O-phospho-beta-D-ribosyl)acetamidine + L-glutamate + ADP + phosphate + H(+). It carries out the reaction L-glutamine + H2O = L-glutamate + NH4(+). The protein operates within purine metabolism; IMP biosynthesis via de novo pathway; 5-amino-1-(5-phospho-D-ribosyl)imidazole from N(2)-formyl-N(1)-(5-phospho-D-ribosyl)glycinamide: step 1/2. Functionally, part of the phosphoribosylformylglycinamidine synthase complex involved in the purines biosynthetic pathway. Catalyzes the ATP-dependent conversion of formylglycinamide ribonucleotide (FGAR) and glutamine to yield formylglycinamidine ribonucleotide (FGAM) and glutamate. The FGAM synthase complex is composed of three subunits. PurQ produces an ammonia molecule by converting glutamine to glutamate. PurL transfers the ammonia molecule to FGAR to form FGAM in an ATP-dependent manner. PurS interacts with PurQ and PurL and is thought to assist in the transfer of the ammonia molecule from PurQ to PurL. The sequence is that of Phosphoribosylformylglycinamidine synthase subunit PurQ from Ruegeria sp. (strain TM1040) (Silicibacter sp.).